The primary structure comprises 809 residues: F-BAR domain only protein 2 (809 aa).

The region spanning Met3–Leu250 is the F-BAR domain. The segment at Met3 to Asp274 is mediates dimerization and binding to membranes enriched in Pi(4,5)-P2 and induces their tubulation. The stretch at His87–Glu156 forms a coiled coil. Lys297 is covalently cross-linked (Glycyl lysine isopeptide (Lys-Gly) (interchain with G-Cter in SUMO2)). Residues Asp301–Pro352 form a disordered region. Ser312 is modified (phosphoserine). Phosphothreonine is present on Thr385. Residues Ser387, Ser394, Ser402, and Ser403 each carry the phosphoserine modification. The span at Val390 to Pro416 shows a compositional bias: polar residues. Disordered stretches follow at residues Val390–Asn422 and Leu435–Leu536. The segment covering Leu435–Leu456 has biased composition (low complexity). 7 positions are modified to phosphoserine: Ser487, Ser492, Ser495, Ser507, Ser509, Ser510, and Ser532. The span at Pro501 to Ala520 shows a compositional bias: low complexity. Residues Ala520–Cys809 form a mediates interaction with DAB2, EPS15, EPS15R and ITSN1 region. The MHD domain occupies Thr541 to Asp808.

It belongs to the FCHO family. As to quaternary structure, homodimer; disulfide-linked. May form homotetramer. Interacts with AP2A1. Interacts with EPS15, EPS15R, ITSN1 and ITSN2; recruit those scaffolding proteins which in turn may interact with the adaptor protein complex AP-2 at the plasma membrane. Interacts with DAB2 (via DPF motifs); mediates LDL receptor/LDLR endocytosis. Post-translationally, ubiquitinated. Mainly undergoes monoubiquitination but also polyubiquitination. As to expression, ubiquitously expressed (at protein level).

The protein localises to the membrane. The protein resides in the clathrin-coated pit. Functionally, functions in an early step of clathrin-mediated endocytosis. Has both a membrane binding/bending activity and the ability to recruit proteins essential to the formation of functional clathrin-coated pits. Has a lipid-binding activity with a preference for membranes enriched in phosphatidylserine and phosphoinositides (Pi(4,5) biphosphate) like the plasma membrane. Its membrane-bending activity might be important for the subsequent action of clathrin and adaptors in the formation of clathrin-coated vesicles. Involved in adaptor protein complex AP-2-dependent endocytosis of the transferrin receptor, it also functions in the AP-2-independent endocytosis of the LDL receptor. The sequence is that of F-BAR domain only protein 2 (Fcho2) from Mus musculus (Mouse).